A 142-amino-acid polypeptide reads, in one-letter code: Large ribosomal subunit protein uL13 (142 aa).

Belongs to the universal ribosomal protein uL13 family. As to quaternary structure, part of the 50S ribosomal subunit.

This protein is one of the early assembly proteins of the 50S ribosomal subunit, although it is not seen to bind rRNA by itself. It is important during the early stages of 50S assembly. The polypeptide is Large ribosomal subunit protein uL13 (Vibrio parahaemolyticus serotype O3:K6 (strain RIMD 2210633)).